We begin with the raw amino-acid sequence, 247 residues long: Phosphatidylserine decarboxylase proenzyme (247 aa).

S206 acts as the Schiff-base intermediate with substrate; via pyruvic acid in catalysis. Residue S206 is modified to Pyruvic acid (Ser); by autocatalysis.

Belongs to the phosphatidylserine decarboxylase family. PSD-A subfamily. Heterodimer of a large membrane-associated beta subunit and a small pyruvoyl-containing alpha subunit. Pyruvate serves as cofactor. Post-translationally, is synthesized initially as an inactive proenzyme. Formation of the active enzyme involves a self-maturation process in which the active site pyruvoyl group is generated from an internal serine residue via an autocatalytic post-translational modification. Two non-identical subunits are generated from the proenzyme in this reaction, and the pyruvate is formed at the N-terminus of the alpha chain, which is derived from the carboxyl end of the proenzyme. The post-translation cleavage follows an unusual pathway, termed non-hydrolytic serinolysis, in which the side chain hydroxyl group of the serine supplies its oxygen atom to form the C-terminus of the beta chain, while the remainder of the serine residue undergoes an oxidative deamination to produce ammonia and the pyruvoyl prosthetic group on the alpha chain.

The protein localises to the cell membrane. The enzyme catalyses a 1,2-diacyl-sn-glycero-3-phospho-L-serine + H(+) = a 1,2-diacyl-sn-glycero-3-phosphoethanolamine + CO2. Its pathway is phospholipid metabolism; phosphatidylethanolamine biosynthesis; phosphatidylethanolamine from CDP-diacylglycerol: step 2/2. Catalyzes the formation of phosphatidylethanolamine (PtdEtn) from phosphatidylserine (PtdSer). This chain is Phosphatidylserine decarboxylase proenzyme, found in Nitrobacter winogradskyi (strain ATCC 25391 / DSM 10237 / CIP 104748 / NCIMB 11846 / Nb-255).